Here is a 99-residue protein sequence, read N- to C-terminus: Small integral membrane protein 14 (99 aa).

Residues Met1–Asn49 are Lumenal-facing. A helical transmembrane segment spans residues Gly50–Leu70. The Cytoplasmic segment spans residues Arg71–Asp99. The segment at Ser78–Asp99 is disordered.

The protein localises to the endoplasmic reticulum membrane. This chain is Small integral membrane protein 14 (SMIM14), found in Bos taurus (Bovine).